A 371-amino-acid chain; its full sequence is Interstrand DNA cross-link repair glycosylase (371 aa).

A QXQ; important for activity motif is present at residues 37–39; it reads QAQ.

It belongs to the DNA glycosylase AlkZ-like family.

Functionally, DNA glycosylase involved in the repair of interstrand DNA cross-links (ICLs), which are highly toxic DNA lesions that covalently tether the opposing strands of DNA, thereby inhibiting essential cellular processes such as DNA replication and transcription. Acts by unhooking both sides of the ICLs, forming abasic (AP) sites on both strands. AlkZ specifically repairs DNA damage induced by azinomycin B (AZB), a natural product with potent antibiotic and antitumor activities that interacts covalently with duplex DNA and forms ICLs. AlkZ thus confers self-resistance to azinomycin B, which is produced by S.sahachiroi. It may also protect target sites by protein-DNA interaction. Binds sequence non-specifically to native DNA and structure-specifically to azinomycin B-modified sites, with higher affinity to azinomycin B-modified sites and lower affinity to native DNA duplex. In vitro, also acts on monoadducts and can catalyze the excision of N7-methylguanine (7mGua) from an oligonucleotide containing N7-methyldeoxyguanosine (d7mG). Is a monofunctional DNA glycosylase that does not have lyase activity. The chain is Interstrand DNA cross-link repair glycosylase from Streptomyces sahachiroi.